A 401-amino-acid chain; its full sequence is Heat shock transcription factor, Y-linked (401 aa).

Residues 1–11 (MAHVSSETQDV) show a composition bias toward polar residues. The tract at residues 1-30 (MAHVSSETQDVSPKDELTASEASTRSPLCE) is disordered. Residues 76–194 (LSLNFPRKLW…PQLLVRVKRR (119 aa)) mediate DNA binding.

It belongs to the HSF family. In terms of tissue distribution, testis-specific. Present in Sertoli cells and spermatogenic cells (at protein level).

It localises to the nucleus. The protein resides in the cytoplasm. The protein is Heat shock transcription factor, Y-linked (HSFY1) of Homo sapiens (Human).